A 472-amino-acid polypeptide reads, in one-letter code: MKFLLFMFVGVVHLLPLASGKAIYGNGPSQRTFQEIKEEIAHYGDVAKSIINLTVYGKAQNRSYERLALLVDTVGPRLSGSKNLERAIEIMQQNLKGDGLENVHLEPVKIPHWERGEESAVMLEPRIHKMAILGLGSSIGTPPEGITAEVLVVTSFDELQRRGPDAEGKIVVYNQPYTNYSAAVQYRMEGAVEAAKVGALASLIRSVASFSIYSPHTGIQEYQKGVPKIPTACITVEDAEMMSRMASRGNRIVVQLKMGAKSYPDADSFNTVAEITGSKYPEQVVLVSGHLDSWDVGQGAMDDGGGAFISWEALSLIKDLGLRPKRTLRLVLWTAEEQGGVGSSQYYQLHKANSSNYSLVMESDLGTFLPSGLKFTGSDKARVIMEEVMSLLQPINITQVLKAGDGTDINFWIQDGVPGASLLDDLYKYFSFHHSHGDTMTVMDPKQMNVAAAVWAVVSYVVADLEEMLPRS.

A signal peptide spans 1–20 (MKFLLFMFVGVVHLLPLASG). Positions 21–44 (KAIYGNGPSQRTFQEIKEEIAHYG) are excised as a propeptide. N-linked (GlcNAc...) asparagine glycosylation is found at N52, N61, and N179. H290 and D302 together coordinate Zn(2+). Residue E336 is the Nucleophile of the active site. E337 serves as a coordination point for Zn(2+). Residues N353 and N356 are each glycosylated (N-linked (GlcNAc...) asparagine). D364 serves as a coordination point for Zn(2+). N396 is a glycosylation site (N-linked (GlcNAc...) asparagine). H434 provides a ligand contact to Zn(2+).

Belongs to the peptidase M28 family. As to quaternary structure, homodimer. The monomeric form is inactive while the homodimer is active. Post-translationally, N-glycosylated. The secreted form is modified by hybrid or complex type oligosaccharide chains.

It localises to the endoplasmic reticulum. Its subcellular location is the golgi apparatus. The protein localises to the lysosome. It is found in the secreted. Carboxypeptidase that may play an important role in the hydrolysis of circulating peptides. Catalyzes the hydrolysis of dipeptides with unsubstituted terminals into amino acids. May play a role in the liberation of thyroxine hormone from its thyroglobulin (Tg) precursor. The sequence is that of Carboxypeptidase Q (CPQ) from Bos taurus (Bovine).